Consider the following 205-residue polypeptide: Thiamine-phosphate synthase (205 aa).

Residues 37 to 41 and N69 contribute to the 4-amino-2-methyl-5-(diphosphooxymethyl)pyrimidine site; that span reads QVREK. D70 and D89 together coordinate Mg(2+). 4-amino-2-methyl-5-(diphosphooxymethyl)pyrimidine is bound at residue S108. 134 to 136 is a 2-[(2R,5Z)-2-carboxy-4-methylthiazol-5(2H)-ylidene]ethyl phosphate binding site; that stretch reads TGS. K137 lines the 4-amino-2-methyl-5-(diphosphooxymethyl)pyrimidine pocket. Residues G165 and 185 to 186 each bind 2-[(2R,5Z)-2-carboxy-4-methylthiazol-5(2H)-ylidene]ethyl phosphate; that span reads IS.

It belongs to the thiamine-phosphate synthase family. Mg(2+) is required as a cofactor.

The catalysed reaction is 2-[(2R,5Z)-2-carboxy-4-methylthiazol-5(2H)-ylidene]ethyl phosphate + 4-amino-2-methyl-5-(diphosphooxymethyl)pyrimidine + 2 H(+) = thiamine phosphate + CO2 + diphosphate. It carries out the reaction 2-(2-carboxy-4-methylthiazol-5-yl)ethyl phosphate + 4-amino-2-methyl-5-(diphosphooxymethyl)pyrimidine + 2 H(+) = thiamine phosphate + CO2 + diphosphate. The enzyme catalyses 4-methyl-5-(2-phosphooxyethyl)-thiazole + 4-amino-2-methyl-5-(diphosphooxymethyl)pyrimidine + H(+) = thiamine phosphate + diphosphate. Its pathway is cofactor biosynthesis; thiamine diphosphate biosynthesis; thiamine phosphate from 4-amino-2-methyl-5-diphosphomethylpyrimidine and 4-methyl-5-(2-phosphoethyl)-thiazole: step 1/1. Functionally, condenses 4-methyl-5-(beta-hydroxyethyl)thiazole monophosphate (THZ-P) and 2-methyl-4-amino-5-hydroxymethyl pyrimidine pyrophosphate (HMP-PP) to form thiamine monophosphate (TMP). The sequence is that of Thiamine-phosphate synthase from Clostridium botulinum (strain Loch Maree / Type A3).